A 349-amino-acid chain; its full sequence is Small ribosomal subunit biogenesis GTPase RsgA 2 (349 aa).

The region spanning 97-252 is the CP-type G domain; the sequence is AEQLIATNVD…IIDTPGMREL (156 aa). GTP-binding positions include 142 to 145 and 194 to 202; these read TKAD and GSSGVGKST. The Zn(2+) site is built by cysteine 275, cysteine 280, histidine 282, and cysteine 288.

This sequence belongs to the TRAFAC class YlqF/YawG GTPase family. RsgA subfamily. As to quaternary structure, monomer. Associates with 30S ribosomal subunit, binds 16S rRNA. Requires Zn(2+) as cofactor.

It is found in the cytoplasm. Functionally, one of several proteins that assist in the late maturation steps of the functional core of the 30S ribosomal subunit. Helps release RbfA from mature subunits. May play a role in the assembly of ribosomal proteins into the subunit. Circularly permuted GTPase that catalyzes slow GTP hydrolysis, GTPase activity is stimulated by the 30S ribosomal subunit. The protein is Small ribosomal subunit biogenesis GTPase RsgA 2 of Vibrio vulnificus (strain CMCP6).